A 1010-amino-acid polypeptide reads, in one-letter code: PHD finger protein 20 (1010 aa).

2 Tudor domains span residues 4 to 69 and 83 to 147; these read HPPN…RPLE and GSSE…GNAR. Disordered regions lie at residues 142–373 and 483–609; these read IVGN…EGQL and EKSP…GKLK. The segment covering 147-246 has biased composition (basic and acidic residues); it reads RPKETDHKSL…VEKKPEKDLV (100 aa). A Phosphoserine modification is found at S159. Positions 257-269 form a DNA-binding region, a.T hook; it reads KRKRGRPPSITPT. Residues 267–280 are compositionally biased toward polar residues; sequence TPTAVDSNSQTLQP. Composition is skewed to basic and acidic residues over residues 292 to 325, 483 to 493, and 525 to 541; these read KRSDTPLKRPRLDKNSPQEQSKKRSENSDKDLSR, EKSPEPEEGPG, and AKEKEKTKEKKFKELVR. The C2H2-type zinc-finger motif lies at 455-485; it reads FRCKVLDCLKFFRKAKLLHYHMKYFHGMEKS. The segment covering 542–554 has biased composition (basic residues); it reads VKPKKKKKKKKKT. Residues 657 to 703 form a PHD-type zinc finger; it reads RCICEVQEENDFMIQCEECQCWQHGVCMGLLEENVPEKYTCYVCQDP. Residues 804–827 are disordered; it reads RSEESPSYRTLNGAVEKPSPLPRS. Residue K841 is modified to N6-acetyllysine. Phosphoserine occurs at positions 876 and 878. Residues 877 to 902 form a disordered region; sequence LSPRLGWPIDQDRSRGDIDPKPSSPK. Over residues 886–902 the composition is skewed to basic and acidic residues; that stretch reads DQDRSRGDIDPKPSSPK.

In terms of assembly, homodimer; disulfide-linked. Component of some MLL1/MLL complex, at least composed of the core components KMT2A/MLL1, ASH2L, HCFC1, WDR5 and RBBP5, as well as the facultative components BACC1, CHD8, E2F6, HSP70, INO80C, KANSL1, LAS1L, MAX, MCRS1, MGA, MYST1/MOF, PELP1, PHF20, PRP31, RING2, RUVB1/TIP49A, RUVB2/TIP49B, SENP3, TAF1, TAF4, TAF6, TAF7, TAF9 and TEX10. Component of the NSL complex at least composed of MOF/KAT8, KANSL1, KANSL2, KANSL3, MCRS1, PHF20, OGT1/OGT, WDR5 and HCFC1. In terms of processing, ubiquitinated by TRIM26; leading to proteasomal degradation.

The protein resides in the nucleus. Contributes to methyllysine-dependent p53/TP53 stabilization and up-regulation after DNA damage. Methyllysine-binding protein, component of the MOF histone acetyltransferase protein complex. Not required for maintaining the global histone H4 'Lys-16' acetylation (H4K16ac) levels or locus specific histone acetylation, but instead works downstream in transcriptional regulation of MOF target genes. As part of the NSL complex it may be involved in acetylation of nucleosomal histone H4 on several lysine residues. This Mus musculus (Mouse) protein is PHD finger protein 20 (Phf20).